The chain runs to 195 residues: Interferon omega-1 (195 aa).

The signal sequence occupies residues 1 to 23 (MAFSVSSLMALVVISSSPVSSMS). 2 disulfides stabilise this stretch: Cys24-Cys122 and Cys52-Cys162. The N-linked (GlcNAc...) asparagine glycan is linked to Asn101.

This sequence belongs to the alpha/beta interferon family.

It localises to the secreted. This Equus caballus (Horse) protein is Interferon omega-1.